The following is a 169-amino-acid chain: MADYQHQQQHQRPADAFKGMFPEKGQAQVQGPSASKVIAVVTLLPLGGFLLLLAGLTFAGTLIGLALSTPLFVLCSPVLVPAAIVIGLAVTGFLTSGAFGITGISSLSWILKYLRGTSVPEQMEHAKRRAQDTAGHLGQKARETGQTVTGKGQEAGKTLEGGRGEEKKT.

2 helical membrane passes run 38–58 (IAVVTLLPLGGFLLLLAGLTF) and 70–90 (PLFVLCSPVLVPAAIVIGLAV). A Proline-knot motif is present at residues 70-81 (PLFVLCSPVLVP). 2 stretches are compositionally biased toward basic and acidic residues: residues 122 to 131 (QMEHAKRRAQ) and 160 to 169 (EGGRGEEKKT). The interval 122-169 (QMEHAKRRAQDTAGHLGQKARETGQTVTGKGQEAGKTLEGGRGEEKKT) is disordered.

This sequence belongs to the oleosin family. Expressed in seeds (at protein level).

Its subcellular location is the lipid droplet. It localises to the membrane. May have a structural role to stabilize the lipid body during desiccation of the seed by preventing coalescence of the oil. Probably interacts with both lipid and phospholipid moieties of lipid bodies. May also provide recognition signals for specific lipase anchorage in lipolysis during seedling growth. This chain is Oleosin Cor a 15, found in Corylus avellana (European hazel).